Reading from the N-terminus, the 474-residue chain is Cytochrome c biogenesis protein CcsB (474 aa).

3 helical membrane-spanning segments follow: residues 36–56 (LKLA…GTVI), 96–116 (SWWF…CTFR), and 182–202 (VGPI…MIGA).

Belongs to the Ccs1/CcsB family. In terms of assembly, may interact with CcsA.

It is found in the cell inner membrane. Required during biogenesis of c-type cytochromes (cytochrome c6 and cytochrome f) at the step of heme attachment. The protein is Cytochrome c biogenesis protein CcsB of Gloeobacter violaceus (strain ATCC 29082 / PCC 7421).